The chain runs to 120 residues: Large ribosomal subunit protein uL18 (120 aa).

This sequence belongs to the universal ribosomal protein uL18 family. Part of the 50S ribosomal subunit; part of the 5S rRNA/L5/L18/L25 subcomplex. Contacts the 5S and 23S rRNAs.

This is one of the proteins that bind and probably mediate the attachment of the 5S RNA into the large ribosomal subunit, where it forms part of the central protuberance. The protein is Large ribosomal subunit protein uL18 of Bacillus cytotoxicus (strain DSM 22905 / CIP 110041 / 391-98 / NVH 391-98).